Here is a 394-residue protein sequence, read N- to C-terminus: Elongation factor Tu 2 (394 aa).

The tr-type G domain occupies 10-204; that stretch reads KPHVNVGTIG…ALDSYIPEPE (195 aa). Positions 19-26 are G1; that stretch reads GHVDHGKT. 19-26 contacts GTP; sequence GHVDHGKT. Thr-26 is a Mg(2+) binding site. The segment at 60-64 is G2; sequence GITIN. The segment at 81–84 is G3; that stretch reads DCPG. GTP contacts are provided by residues 81–85 and 136–139; these read DCPGH and NKCD. The interval 136-139 is G4; the sequence is NKCD. The segment at 174–176 is G5; the sequence is SAL.

It belongs to the TRAFAC class translation factor GTPase superfamily. Classic translation factor GTPase family. EF-Tu/EF-1A subfamily. In terms of assembly, monomer.

The protein localises to the cytoplasm. It catalyses the reaction GTP + H2O = GDP + phosphate + H(+). In terms of biological role, GTP hydrolase that promotes the GTP-dependent binding of aminoacyl-tRNA to the A-site of ribosomes during protein biosynthesis. The chain is Elongation factor Tu 2 from Shewanella sp. (strain MR-4).